Consider the following 344-residue polypeptide: Phenylalanine--tRNA ligase alpha subunit (344 aa).

Residue Glu256 participates in Mg(2+) binding.

It belongs to the class-II aminoacyl-tRNA synthetase family. Phe-tRNA synthetase alpha subunit type 1 subfamily. In terms of assembly, tetramer of two alpha and two beta subunits. Requires Mg(2+) as cofactor.

It localises to the cytoplasm. It carries out the reaction tRNA(Phe) + L-phenylalanine + ATP = L-phenylalanyl-tRNA(Phe) + AMP + diphosphate + H(+). The chain is Phenylalanine--tRNA ligase alpha subunit from Oceanobacillus iheyensis (strain DSM 14371 / CIP 107618 / JCM 11309 / KCTC 3954 / HTE831).